The chain runs to 116 residues: Large ribosomal subunit protein bL17 (116 aa).

The protein belongs to the bacterial ribosomal protein bL17 family. Part of the 50S ribosomal subunit. Contacts protein L32.

The protein is Large ribosomal subunit protein bL17 of Synechococcus sp. (strain WH7803).